We begin with the raw amino-acid sequence, 90 residues long: Cyclin-dependent kinases regulatory subunit 1 (90 aa).

The protein belongs to the CKS family.

Binds to the catalytic subunit of the cyclin dependent kinases and is essential for their biological function. This chain is Cyclin-dependent kinases regulatory subunit 1 (CKS1), found in Oryza sativa subsp. indica (Rice).